A 210-amino-acid chain; its full sequence is Dynactin-associated protein (210 aa).

Residues 1–113 are Cytoplasmic-facing; it reads MVADIKGNEQ…YCRNDWSMWK (113 aa). The helical; Signal-anchor for type II membrane protein transmembrane segment at 114–134 threads the bilayer; the sequence is VFLACLLACVIMTAIGVLIIC. Residues 135–210 are Extracellular-facing; that stretch reads LVNNKGSANS…PITVAPTDHL (76 aa). Positions 168-210 are disordered; it reads ACPPTMTTTSTVPASTATESTTSTATAATTSTEPITVAPTDHL. The segment covering 171-203 has biased composition (low complexity); sequence PTMTTTSTVPASTATESTTSTATAATTSTEPIT.

In terms of assembly, interacts with DCTN1 and DCTN2. Expressed in fibroblast and numerous cancer cell lines (at protein level).

It is found in the golgi apparatus membrane. It localises to the cell membrane. Plays a role in the regulation of cell proliferation. Promotes activation of the AKT1 signaling pathway. Promotes phosphorylation of AKT1 at 'Ser-473'. This Homo sapiens (Human) protein is Dynactin-associated protein (DYNAP).